A 278-amino-acid polypeptide reads, in one-letter code: Energy-coupling factor transporter ATP-binding protein EcfA1 (278 aa).

In terms of domain architecture, ABC transporter spans 5–239 (LLLESVSYQY…QDKLEAAGID (235 aa)). ATP is bound at residue 39–46 (GPNGSGKS).

Belongs to the ABC transporter superfamily. Energy-coupling factor EcfA family. Forms a stable energy-coupling factor (ECF) transporter complex composed of 2 membrane-embedded substrate-binding proteins (S component), 2 ATP-binding proteins (A component) and 2 transmembrane proteins (T component).

The protein localises to the cell membrane. Its function is as follows. ATP-binding (A) component of a common energy-coupling factor (ECF) ABC-transporter complex. Unlike classic ABC transporters this ECF transporter provides the energy necessary to transport a number of different substrates. This is Energy-coupling factor transporter ATP-binding protein EcfA1 from Halalkalibacterium halodurans (strain ATCC BAA-125 / DSM 18197 / FERM 7344 / JCM 9153 / C-125) (Bacillus halodurans).